A 229-amino-acid polypeptide reads, in one-letter code: Calcyclin-binding protein (229 aa).

An N-acetylalanine modification is found at Ala-2. The interval 2-81 (ASALEELQKD…YTVKISNYGW (80 aa)) is interaction with SIAH1. Ser-3 is subject to Phosphoserine. N6-acetyllysine occurs at positions 10 and 21. A Phosphoserine modification is found at Ser-36. Positions 38–59 (IETELRNKMQQKSQKKPEFDNE) are disordered. The CS domain maps to 74–168 (VKISNYGWDQ…AENTRWDYLT (95 aa)). Positions 74 to 229 (VKISNYGWDQ…EKQAREDTEF (156 aa)) are interaction with SKP1. Residues Lys-86 and Lys-119 each carry the N6-acetyllysine modification. Positions 155 to 229 (CRKKAENTRW…EKQAREDTEF (75 aa)) are interaction with S100A6. The region spanning 169–229 (QVEKECKEKE…EKQAREDTEF (61 aa)) is the SGS domain.

In terms of assembly, component of some large E3 complex at least composed of UBE2D1, SIAH1, CACYBP/SIP, SKP1, APC and TBL1X. Interacts directly with SIAH1, SIAH2 and SKP1. Interacts with protein of the S100 family S100A1, S100A6, S100B, S100P and S100A12 in a calcium-dependent manner. Post-translationally, phosphorylated on serine residues. Phosphorylated upon induction by RA or at high calcium concentrations.

Its subcellular location is the nucleus. It is found in the cytoplasm. May be involved in calcium-dependent ubiquitination and subsequent proteasomal degradation of target proteins. Probably serves as a molecular bridge in ubiquitin E3 complexes. Participates in the ubiquitin-mediated degradation of beta-catenin (CTNNB1). This is Calcyclin-binding protein (Cacybp) from Rattus norvegicus (Rat).